Reading from the N-terminus, the 476-residue chain is Lactate utilization protein B 1 (476 aa).

4Fe-4S ferredoxin-type domains follow at residues Gly301–Tyr331 and Tyr350–Leu379. [4Fe-4S] cluster is bound by residues Cys310, Cys313, Cys316, Cys320, Cys363, Cys366, and Cys370.

This sequence belongs to the LutB/YkgF family.

Its function is as follows. Is involved in L-lactate degradation and allows cells to grow with lactate as the sole carbon source. Has probably a role as an electron transporter during oxidation of L-lactate. This is Lactate utilization protein B 1 from Bacillus mycoides (strain KBAB4) (Bacillus weihenstephanensis).